A 343-amino-acid polypeptide reads, in one-letter code: Type II restriction enzyme BsuMI component YdiS (343 aa).

In terms of assembly, bsuMI restriction activity requires YdiR, YdiS and YdjA.

The enzyme catalyses Endonucleolytic cleavage of DNA to give specific double-stranded fragments with terminal 5'-phosphates.. A P subtype restriction enzyme that recognizes the double-stranded sequence 5'-CTCGAG-3'; the cleavage site is unknown. The sequence is that of Type II restriction enzyme BsuMI component YdiS (ydiS) from Bacillus subtilis (strain 168).